The sequence spans 311 residues: Pyrimidine-specific ribonucleoside hydrolase RihA (311 aa).

Residue His240 is part of the active site.

The protein belongs to the IUNH family. RihA subfamily.

Functionally, hydrolyzes with equal efficiency cytidine or uridine to ribose and cytosine or uracil, respectively. This is Pyrimidine-specific ribonucleoside hydrolase RihA from Escherichia coli (strain SMS-3-5 / SECEC).